Here is a 591-residue protein sequence, read N- to C-terminus: Pyruvate kinase 2 (591 aa).

Position 38 (arginine 38) interacts with substrate. Asparagine 40, serine 42, and aspartate 72 together coordinate K(+). 40 to 43 (NFSH) is an ATP binding site. ATP-binding residues include arginine 79 and lysine 164. A Mg(2+)-binding site is contributed by glutamate 229. Residues glycine 252, aspartate 253, and threonine 285 each contribute to the substrate site. Residue aspartate 253 coordinates Mg(2+).

The protein belongs to the pyruvate kinase family. In the C-terminal section; belongs to the PEP-utilizing enzyme family. Homotetramer. Requires Mg(2+) as cofactor. The cofactor is K(+).

The enzyme catalyses pyruvate + ATP = phosphoenolpyruvate + ADP + H(+). It participates in carbohydrate degradation; glycolysis; pyruvate from D-glyceraldehyde 3-phosphate: step 5/5. This is Pyruvate kinase 2 (pyk2) from Synechocystis sp. (strain ATCC 27184 / PCC 6803 / Kazusa).